A 489-amino-acid polypeptide reads, in one-letter code: Alpha-amylase (489 aa).

An N-terminal signal peptide occupies residues 1 to 16 (HFKPILVLCLATLALG). A disulfide bond links Cys-44 and Cys-102. The Ca(2+) site is built by Asn-116, Arg-164, and Asp-173. Cys-152 and Cys-166 form a disulfide bridge. Position 201 (Arg-201) interacts with chloride. Asp-203 serves as the catalytic Nucleophile. Residue His-207 participates in Ca(2+) binding. The active-site Proton donor is the Glu-240. Residues Asn-303 and Arg-339 each coordinate chloride. Intrachain disulfides connect Cys-372–Cys-378 and Cys-443–Cys-455.

The protein belongs to the glycosyl hydrolase 13 family. In terms of assembly, monomer. Ca(2+) is required as a cofactor. It depends on chloride as a cofactor.

It carries out the reaction Endohydrolysis of (1-&gt;4)-alpha-D-glucosidic linkages in polysaccharides containing three or more (1-&gt;4)-alpha-linked D-glucose units.. This Tribolium castaneum (Red flour beetle) protein is Alpha-amylase.